The chain runs to 525 residues: MSDIHEHKILILDFGSQYTQLIARRIREIGVYCELWAWDVTEAQIREFAPNGIILAGGPESVTADNSPRAPEYVFNAGVPVLGICYGMQTMSEQLGGKVIQGVGEGEFGYAQIEMLAQSALFKDIEDAVNSDGKSLLDVWMSHGDKVSAIPEGFVAVAKTDTCPFAAMSCEEKRFYGVQFHPEVTHTRQGMRMLSHFALDICGCAANWKPSSIIEDAIERLKKQVGDDEVILGLSGGVDSSVVAMLLHRAIGKKLTCVFVDNGLLRLNEAKQVMEMFGDHFGLNIVHIDAENRFLDALKGEADPEAKRKIIGRVFVEIFDEEAKKCVNAKWLAQGTIYPDVIESAGSATGKAHVIKSHHNVGGLPDDMELGLVEPLRELFKDEVRKIGLELGLPYNMLYRHPFPGPGLGVRVLGEVKKEYCDLLRRADAIFIEELHKADLYNKVSQAFTVFLPVRSVGVMGDGRKYDWVVSLRAVETIDFMTAHWAHLPYDFLGRVSNRIINEIDGISRVVYDISGKPPATIEWE.

In terms of domain architecture, Glutamine amidotransferase type-1 spans 8–207 (KILILDFGSQ…ALDICGCAAN (200 aa)). Catalysis depends on Cys-85, which acts as the Nucleophile. Active-site residues include His-181 and Glu-183. A GMPS ATP-PPase domain is found at 208–400 (WKPSSIIEDA…LGLPYNMLYR (193 aa)). 235–241 (SGGVDSS) lines the ATP pocket.

Homodimer.

The catalysed reaction is XMP + L-glutamine + ATP + H2O = GMP + L-glutamate + AMP + diphosphate + 2 H(+). It functions in the pathway purine metabolism; GMP biosynthesis; GMP from XMP (L-Gln route): step 1/1. Functionally, catalyzes the synthesis of GMP from XMP. The chain is GMP synthase [glutamine-hydrolyzing] from Shewanella sp. (strain MR-7).